The following is a 282-amino-acid chain: Pantothenate synthetase (282 aa).

Position 33–40 (33–40 (MGALHAGH)) interacts with ATP. Residue H40 is the Proton donor of the active site. Q64 provides a ligand contact to (R)-pantoate. Q64 is a binding site for beta-alanine. Position 150–153 (150–153 (GEKD)) interacts with ATP. Q156 is a binding site for (R)-pantoate. Residues V179 and 187–190 (LSSR) contribute to the ATP site.

The protein belongs to the pantothenate synthetase family. As to quaternary structure, homodimer.

It is found in the cytoplasm. It catalyses the reaction (R)-pantoate + beta-alanine + ATP = (R)-pantothenate + AMP + diphosphate + H(+). The protein operates within cofactor biosynthesis; (R)-pantothenate biosynthesis; (R)-pantothenate from (R)-pantoate and beta-alanine: step 1/1. Its function is as follows. Catalyzes the condensation of pantoate with beta-alanine in an ATP-dependent reaction via a pantoyl-adenylate intermediate. The chain is Pantothenate synthetase from Rhodospirillum rubrum (strain ATCC 11170 / ATH 1.1.1 / DSM 467 / LMG 4362 / NCIMB 8255 / S1).